Consider the following 481-residue polypeptide: tRNA:m(4)X modification enzyme TRM13 homolog (481 aa).

A2 is modified (N-acetylalanine). Residues 56-83 (RILCPLDPKHTVYEDQLAKHLKKCNSRE) form a CHHC U11-48K-type zinc finger. Zn(2+) is bound by residues C59, H65, H75, and C79. The stretch at 113 to 140 (SLSEEQLEKLIKKLRKASEGLNSTLKDH) forms a coiled coil. Residues 381–408 (ETSNSTTKRQDNQNDDSEEHDDGGYRIT) form a disordered region.

Belongs to the methyltransferase TRM13 family.

The enzyme catalyses cytidine(4) in tRNA(Pro) + S-adenosyl-L-methionine = 2'-O-methylcytidine(4) in tRNA(Pro) + S-adenosyl-L-homocysteine + H(+). It catalyses the reaction cytidine(4) in tRNA(Gly)(GCC) + S-adenosyl-L-methionine = 2'-O-methylcytidine(4) in tRNA(Gly)(GCC) + S-adenosyl-L-homocysteine + H(+). The catalysed reaction is adenosine(4) in tRNA(His) + S-adenosyl-L-methionine = 2'-O-methyladenosine(4) in tRNA(His) + S-adenosyl-L-homocysteine + H(+). Its function is as follows. tRNA methylase which 2'-O-methylates cytidine(4) in tRNA(Pro) and tRNA(Gly)(GCC), and adenosine(4) in tRNA(His). The chain is tRNA:m(4)X modification enzyme TRM13 homolog (TRMT13) from Homo sapiens (Human).